The following is a 58-amino-acid chain: Single-pass membrane and coiled-coil domain-containing protein 4 homolog (58 aa).

Residues 1–31 (MRQLKGKVKETRKQKKERKLDNLETQAKIRT) adopt a coiled-coil conformation. Residues 31–51 (TVVLPALGVLAVFLVLFVYLK) form a helical membrane-spanning segment.

The protein belongs to the SMCO4 family.

It is found in the membrane. This chain is Single-pass membrane and coiled-coil domain-containing protein 4 homolog, found in Drosophila melanogaster (Fruit fly).